The chain runs to 160 residues: UPF0262 protein Oant_0325 (160 aa).

This sequence belongs to the UPF0262 family.

This Brucella anthropi (strain ATCC 49188 / DSM 6882 / CCUG 24695 / JCM 21032 / LMG 3331 / NBRC 15819 / NCTC 12168 / Alc 37) (Ochrobactrum anthropi) protein is UPF0262 protein Oant_0325.